Reading from the N-terminus, the 2112-residue chain is Phenolphthiocerol synthesis polyketide synthase type I Pks15/1 (2112 aa).

In terms of domain architecture, Ketosynthase family 3 (KS3) spans 46–469 (TEPVAVVGIG…GTNAHLILEE (424 aa)). Residues C216, H351, and H391 each act as for beta-ketoacyl synthase activity in the active site. Residues 579–893 (TVVVFPGQGA…GQVFTTGVPV (315 aa)) form an acyltransferase region. Catalysis depends on S670, which acts as the For acyltransferase activity. The N-terminal hotdog fold stretch occupies residues 941–1063 (HALLGAVVER…GMLGVAAAET (123 aa)). A dehydratase region spans residues 941-1101 (HALLGAVVER…YAYGPAFQGL (161 aa)). Residues 941 to 1215 (HALLGAVVER…TRPITAEQLR (275 aa)) form the PKS/mFAS DH domain. H973 acts as the Proton acceptor; for dehydratase activity in catalysis. Residues 1075-1215 (AESVDISDGY…TRPITAEQLR (141 aa)) are C-terminal hotdog fold. D1136 serves as the catalytic Proton donor; for dehydratase activity. An enoylreductase region spans residues 1406–1711 (GTLEDLVIQP…QARHIGKVVL (306 aa)). NADP(+) contacts are provided by residues 1536 to 1553 (VLIH…VQLA) and 1725 to 1740 (TVVI…GVLA). The interval 1724–1905 (GTVVITGATG…SLAWGLWEQP (182 aa)) is beta-ketoacyl reductase. The 76-residue stretch at 2010-2085 (ELLVGLVCLQ…AVAEYVAQQM (76 aa)) folds into the Carrier domain. S2045 carries the O-(pantetheine 4'-phosphoryl)serine modification. The span at 2084 to 2100 (QMSGSRPTESGDPTSQV) shows a compositional bias: polar residues. Residues 2084-2112 (QMSGSRPTESGDPTSQVVEPAAAEVSVHA) form a disordered region.

It belongs to the thiolase-like superfamily. Beta-ketoacyl-ACP synthases family. Requires pantetheine 4'-phosphate as cofactor.

It carries out the reaction a fatty acyl-[ACP] + malonyl-[ACP] + H(+) = a 3-oxoacyl-[ACP] + holo-[ACP] + CO2. The protein operates within lipid metabolism; fatty acid biosynthesis. Catalyzes the elongation by iterative transfer of p-hydroxybenzoyl group from FadD22 (pHBA-S-FAdD22) to form p-hydroxyphenylalkanoate (pHPA) intermediates during phenolphthiocerol (PPOL) biosynthesis. PPOL is an important intermediate in the biosynthesis of phenolic glycolipid (mycosid B). This Mycobacterium bovis (strain ATCC BAA-935 / AF2122/97) protein is Phenolphthiocerol synthesis polyketide synthase type I Pks15/1 (pks15/1).